The sequence spans 252 residues: Electron transfer flavoprotein subunit beta (252 aa).

This sequence belongs to the ETF beta-subunit/FixA family. As to quaternary structure, heterodimer of an alpha and a beta subunit. It depends on AMP as a cofactor.

The protein resides in the cytoplasm. It participates in lipid metabolism; butanoate metabolism. Functionally, part of an electron transfer flavoprotein involved in syntrophic growth of S.wolfei with butyrate. Probably receives electrons from butyryl-CoA dehydrogenases, and transfers them to the membrane-bound quinone oxidoreductase Swol_0698. This is Electron transfer flavoprotein subunit beta from Syntrophomonas wolfei subsp. wolfei (strain DSM 2245B / Goettingen).